Reading from the N-terminus, the 298-residue chain is GTPase Era (298 aa).

The Era-type G domain occupies 3-170 (KSGFVAILGR…IKLLTDNLEE (168 aa)). Positions 11-18 (GRPNVGKS) are G1. GTP is bound at residue 11–18 (GRPNVGKS). The G2 stretch occupies residues 37–41 (QTTRN). The segment at 58–61 (DTPG) is G3. GTP is bound by residues 58-62 (DTPGI) and 120-123 (NKID). Residues 120–123 (NKID) form a G4 region. Positions 149–151 (ISA) are G5. The KH type-2 domain occupies 201-279 (TQQEVPHSVA…YLETWVKVKK (79 aa)).

Belongs to the TRAFAC class TrmE-Era-EngA-EngB-Septin-like GTPase superfamily. Era GTPase family. As to quaternary structure, monomer.

Its subcellular location is the cytoplasm. The protein resides in the cell membrane. An essential GTPase that binds both GDP and GTP, with rapid nucleotide exchange. Plays a role in 16S rRNA processing and 30S ribosomal subunit biogenesis and possibly also in cell cycle regulation and energy metabolism. The sequence is that of GTPase Era from Streptococcus pyogenes serotype M3 (strain ATCC BAA-595 / MGAS315).